The following is a 134-amino-acid chain: Small ribosomal subunit protein uS8c (134 aa).

Belongs to the universal ribosomal protein uS8 family. As to quaternary structure, part of the 30S ribosomal subunit.

It is found in the plastid. Its subcellular location is the chloroplast. In terms of biological role, one of the primary rRNA binding proteins, it binds directly to 16S rRNA central domain where it helps coordinate assembly of the platform of the 30S subunit. This Lotus japonicus (Lotus corniculatus var. japonicus) protein is Small ribosomal subunit protein uS8c (rps8).